Consider the following 89-residue polypeptide: Small ribosomal subunit protein bS16 (89 aa).

It belongs to the bacterial ribosomal protein bS16 family.

This Anaplasma marginale (strain Florida) protein is Small ribosomal subunit protein bS16.